The chain runs to 226 residues: Orotate phosphoribosyltransferase (226 aa).

Residues Lys26, 73–74, Arg100, Lys101, Lys104, His106, and 128–136 contribute to the 5-phospho-alpha-D-ribose 1-diphosphate site; these read YK and EDVTTSGKS. Residues Thr132 and Arg161 each contribute to the orotate site.

This sequence belongs to the purine/pyrimidine phosphoribosyltransferase family. PyrE subfamily. As to quaternary structure, homodimer. The cofactor is Mg(2+).

It catalyses the reaction orotidine 5'-phosphate + diphosphate = orotate + 5-phospho-alpha-D-ribose 1-diphosphate. Its pathway is pyrimidine metabolism; UMP biosynthesis via de novo pathway; UMP from orotate: step 1/2. In terms of biological role, catalyzes the transfer of a ribosyl phosphate group from 5-phosphoribose 1-diphosphate to orotate, leading to the formation of orotidine monophosphate (OMP). The polypeptide is Orotate phosphoribosyltransferase (Agathobacter rectalis (strain ATCC 33656 / DSM 3377 / JCM 17463 / KCTC 5835 / VPI 0990) (Eubacterium rectale)).